The following is a 967-amino-acid chain: MSEYKETLNLLQTPFPMKGDLPRREPALVERWAAQRVYARMRAAAAGRPPFVLHDGPPYANGDIHIGHAVNKVLKDIVLKSRFAAGYDAQWIPGWDCHGMPIEHRIEQLHGRGLPPAAVQRLCREYAFEQTERQRRDFLRLGLLGDWPHAFRTMDFRTEANELRFLERIRARGLLYRGQKPVNWCVDCQSALAEAELEYARKTSVAIHAGLRVRDPVDFASRFRRRPVLDKPAMLVVWTTTPWTIPGNAAAGVRADAPYGLYDTPGALIVVAQPLADALFASLGVDHALCALARGRELVGLALGQPFFAGRDVPVVEAEFVTLDAGTGIVHLAPAHGAEDAELCRRLGIAGENVVDGAGRFAADLPEIGGLPLADGIARIVAKLRADGTLVREAAFEHAYPHCWRHKTPILFRSTPQWFIGMDIECEQGEADPGRAAVTEEAGATGEARKVGKAEEAEEAGPAKTLRASARDAIADVPFYPPSARQRMEAMIDGRPDWCVSRQRTWGVPLPYFVRRDDRSLHPRSARLVEAVAARVERDGIAAWSRLRPAELGVDENAYEKLSDTLDVWFDSGSIHATVYRDAARADTGGYPADLYLEGADQHRGWFGASLMTGCAADGRAPFRAILTHGFVVDGAGRKMSKSLGNTVSPQRIADTRGADILRLWIASTDYAAEMSISDEILERVVETYRRMRNTLRFLLQNVADFDPRDDAVPAGQLLDVDRYALARCREFVDACRSAYARYDFVAVTRLAHGYCAEELGGFYLDALKDRLYASVADGVERRAAQTALHSVLANLLISIAPILSFTAEEAWTVFAGDERDSVFLHTWDEHAPPPDDAALARWAHVRALRPHVTKALEEARGAALIGRSSEAELVVRAPRDVLDALAPLHGELAAVFIVAGVTLETADQIAVAVARTPLARCERCWRHEPSVAAHASGDALCARCRHALSRRARAERSEPRAAVGSR.

Positions 58 to 68 (PYANGDIHIGH) match the 'HIGH' region motif. The span at 437 to 446 (AVTEEAGATG) shows a compositional bias: low complexity. The interval 437 to 466 (AVTEEAGATGEARKVGKAEEAEEAGPAKTL) is disordered. Glu-598 contacts L-isoleucyl-5'-AMP. The 'KMSKS' region motif lies at 639 to 643 (KMSKS). Lys-642 contributes to the ATP binding site. Residues Cys-922, Cys-925, Cys-942, and Cys-945 each coordinate Zn(2+).

It belongs to the class-I aminoacyl-tRNA synthetase family. IleS type 1 subfamily. In terms of assembly, monomer. Zn(2+) is required as a cofactor.

The protein localises to the cytoplasm. The enzyme catalyses tRNA(Ile) + L-isoleucine + ATP = L-isoleucyl-tRNA(Ile) + AMP + diphosphate. Catalyzes the attachment of isoleucine to tRNA(Ile). As IleRS can inadvertently accommodate and process structurally similar amino acids such as valine, to avoid such errors it has two additional distinct tRNA(Ile)-dependent editing activities. One activity is designated as 'pretransfer' editing and involves the hydrolysis of activated Val-AMP. The other activity is designated 'posttransfer' editing and involves deacylation of mischarged Val-tRNA(Ile). The chain is Isoleucine--tRNA ligase 2 from Burkholderia mallei (strain ATCC 23344).